Here is a 451-residue protein sequence, read N- to C-terminus: Lipase member H (451 aa).

The N-terminal stretch at 1–16 is a signal peptide; the sequence is MLRLCFLLSFMCLVKS. A glycan (N-linked (GlcNAc...) asparagine) is linked at N66. Catalysis depends on S154, which acts as the Nucleophile. D178 (charge relay system) is an active-site residue. A disulfide bridge links C233 with C246. H248 functions as the Charge relay system in the catalytic mechanism. 3 disulfides stabilise this stretch: C270-C281, C284-C292, and C427-C446.

It belongs to the AB hydrolase superfamily. Lipase family. Interacts with TTMP/C3orf52.

The protein resides in the secreted. It is found in the cell membrane. The catalysed reaction is 1-hexadecanoyl-2-(9Z-octadecenoyl)-sn-glycero-3-phosphate + H2O = 2-(9Z-octadecenoyl)-sn-glycero-3-phosphate + hexadecanoate + H(+). Hydrolyzes specifically phosphatidic acid (PA) to produce 2-acyl lysophosphatidic acid (LPA; a potent bioactive lipid mediator) and fatty acid. Does not hydrolyze other phospholipids, like phosphatidylserine (PS), phosphatidylcholine (PC) and phosphatidylethanolamine (PE) or triacylglycerol (TG). This chain is Lipase member H (Liph), found in Rattus norvegicus (Rat).